Reading from the N-terminus, the 172-residue chain is Protein GrpE (172 aa).

The interval 1–23 (MNQDHPECDSEELTQNSPETDPL) is disordered.

It belongs to the GrpE family. In terms of assembly, homodimer.

It localises to the cytoplasm. Participates actively in the response to hyperosmotic and heat shock by preventing the aggregation of stress-denatured proteins, in association with DnaK and GrpE. It is the nucleotide exchange factor for DnaK and may function as a thermosensor. Unfolded proteins bind initially to DnaJ; upon interaction with the DnaJ-bound protein, DnaK hydrolyzes its bound ATP, resulting in the formation of a stable complex. GrpE releases ADP from DnaK; ATP binding to DnaK triggers the release of the substrate protein, thus completing the reaction cycle. Several rounds of ATP-dependent interactions between DnaJ, DnaK and GrpE are required for fully efficient folding. This chain is Protein GrpE, found in Xylella fastidiosa (strain 9a5c).